A 433-amino-acid polypeptide reads, in one-letter code: Zinc finger protein CONSTANS-LIKE 15 (433 aa).

8 residues coordinate Zn(2+): Cys-9, Cys-12, Cys-32, His-37, Cys-52, Cys-55, Cys-75, and His-80. The B box-type 1; atypical zinc-finger motif lies at 9–51 (CDFCGERTAVLFCRADTAKLCLPCDQQVHTANLLSRKHVRSQI). The B box-type 2; atypical zinc-finger motif lies at 52–94 (CDNCGNEPVSVRCFTDNLILCQECDWDVHGSCSVSDAHVRSAV). Residues 319–353 (DDYKRSTSGQVQPTKSESNNRPITFGSEKGSNSSS) are disordered. Residues 324 to 340 (STSGQVQPTKSESNNRP) are compositionally biased toward polar residues. A coiled-coil region spans residues 374–398 (TKADLERLAQNRGDAMQRYKEKRKT). One can recognise a CCT domain in the interval 385–427 (RGDAMQRYKEKRKTRRYDKTIRYESRKARADTRLRVRGRFVKA).

Belongs to the CONSTANS family.

The protein resides in the nucleus. The polypeptide is Zinc finger protein CONSTANS-LIKE 15 (COL15) (Arabidopsis thaliana (Mouse-ear cress)).